The chain runs to 266 residues: Phosphatidylglycerol--prolipoprotein diacylglyceryl transferase (266 aa).

The next 7 membrane-spanning stretches (helical) occupy residues 10 to 30, 56 to 76, 92 to 112, 120 to 140, 172 to 192, 200 to 220, and 234 to 254; these read VAIA…LVGI, LVFW…VFFY, WEGG…TWWF, FFEL…AGRI, PSQL…LWFY, MAVS…VEFV, and WLTM…GLIA. R139 provides a ligand contact to a 1,2-diacyl-sn-glycero-3-phospho-(1'-sn-glycerol).

It belongs to the Lgt family.

It is found in the cell inner membrane. The enzyme catalyses L-cysteinyl-[prolipoprotein] + a 1,2-diacyl-sn-glycero-3-phospho-(1'-sn-glycerol) = an S-1,2-diacyl-sn-glyceryl-L-cysteinyl-[prolipoprotein] + sn-glycerol 1-phosphate + H(+). The protein operates within protein modification; lipoprotein biosynthesis (diacylglyceryl transfer). Its function is as follows. Catalyzes the transfer of the diacylglyceryl group from phosphatidylglycerol to the sulfhydryl group of the N-terminal cysteine of a prolipoprotein, the first step in the formation of mature lipoproteins. This is Phosphatidylglycerol--prolipoprotein diacylglyceryl transferase from Ectopseudomonas mendocina (strain ymp) (Pseudomonas mendocina).